A 428-amino-acid polypeptide reads, in one-letter code: Glutamate-1-semialdehyde 2,1-aminomutase (428 aa).

Residue K267 is modified to N6-(pyridoxal phosphate)lysine.

It belongs to the class-III pyridoxal-phosphate-dependent aminotransferase family. HemL subfamily. Homodimer. Pyridoxal 5'-phosphate serves as cofactor.

The protein localises to the cytoplasm. The enzyme catalyses (S)-4-amino-5-oxopentanoate = 5-aminolevulinate. Its pathway is porphyrin-containing compound metabolism; protoporphyrin-IX biosynthesis; 5-aminolevulinate from L-glutamyl-tRNA(Glu): step 2/2. The chain is Glutamate-1-semialdehyde 2,1-aminomutase from Flavobacterium psychrophilum (strain ATCC 49511 / DSM 21280 / CIP 103535 / JIP02/86).